The chain runs to 182 residues: ATP-dependent protease subunit HslV (182 aa).

The active site involves Thr-7. 3 residues coordinate Na(+): Ala-166, Cys-169, and Thr-172.

Belongs to the peptidase T1B family. HslV subfamily. As to quaternary structure, a double ring-shaped homohexamer of HslV is capped on each side by a ring-shaped HslU homohexamer. The assembly of the HslU/HslV complex is dependent on binding of ATP.

The protein resides in the cytoplasm. The enzyme catalyses ATP-dependent cleavage of peptide bonds with broad specificity.. Its activity is regulated as follows. Allosterically activated by HslU binding. Protease subunit of a proteasome-like degradation complex believed to be a general protein degrading machinery. In Albidiferax ferrireducens (strain ATCC BAA-621 / DSM 15236 / T118) (Rhodoferax ferrireducens), this protein is ATP-dependent protease subunit HslV.